Consider the following 362-residue polypeptide: Ribosome-binding ATPase YchF (362 aa).

An OBG-type G domain is found at 3–255; it reads FKCGIIGLPN…MNEDEQKYFM (253 aa). An ATP-binding site is contributed by 12–17; it reads NVGKST. Mg(2+)-binding residues include Ser16 and Thr36. The TGS domain maps to 277–360; the sequence is NLITFFTAGI…QDGDIINFLF (84 aa).

This sequence belongs to the TRAFAC class OBG-HflX-like GTPase superfamily. OBG GTPase family. YchF/OLA1 subfamily. Mg(2+) serves as cofactor.

Functionally, ATPase that binds to both the 70S ribosome and the 50S ribosomal subunit in a nucleotide-independent manner. The polypeptide is Ribosome-binding ATPase YchF (Buchnera aphidicola subsp. Schizaphis graminum (strain Sg)).